Consider the following 535-residue polypeptide: Peptide chain release factor 3 (535 aa).

Residues 8–276 (ARRRTFAIIS…ALVDLAPQPG (269 aa)) enclose the tr-type G domain. Residues 17-24 (SHPDAGKT), 85-89 (DTPGH), and 139-142 (NKMD) each bind GTP.

The protein belongs to the TRAFAC class translation factor GTPase superfamily. Classic translation factor GTPase family. PrfC subfamily.

It is found in the cytoplasm. Functionally, increases the formation of ribosomal termination complexes and stimulates activities of RF-1 and RF-2. It binds guanine nucleotides and has strong preference for UGA stop codons. It may interact directly with the ribosome. The stimulation of RF-1 and RF-2 is significantly reduced by GTP and GDP, but not by GMP. The protein is Peptide chain release factor 3 of Bordetella avium (strain 197N).